Consider the following 179-residue polypeptide: MSRTGKKPISLPEKVDVKFEGLSITVKGPKGELKRTLPNGVSLSKDENFIFVKPINEKRQSREMHGLCRSLVANMVEGVSNGFTKKLEIVGVGSRAQVKGKTLVVSAGYSHPVEVVPPEGITFKVENNTNVIVTGPDKELVGNEAAKIRAIRPPEPYKGKGIKYQGELIIRKAGKSGKT.

Belongs to the universal ribosomal protein uL6 family. Part of the 50S ribosomal subunit.

In terms of biological role, this protein binds to the 23S rRNA, and is important in its secondary structure. It is located near the subunit interface in the base of the L7/L12 stalk, and near the tRNA binding site of the peptidyltransferase center. This is Large ribosomal subunit protein uL6 from Prochlorococcus marinus (strain NATL2A).